A 191-amino-acid chain; its full sequence is Calcium-binding protein CML42 (191 aa).

3 EF-hand domains span residues 25–60, 116–151, and 154–189; these read LNAL…LGLN, ENES…LGLP, and GEME…VVIP. D38, N40, D42, E49, D129, N131, D133, E140, D167, N169, D171, R173, and E178 together coordinate Ca(2+).

In terms of assembly, interacts with KIC. As to expression, expressed in seedling shoots, roots, rosette leaves and flowers. Expressed in the leaf trichome support cells.

Probable calcium sensor that binds calcium in vitro. Involved in the regulation of trichome branching. In Arabidopsis thaliana (Mouse-ear cress), this protein is Calcium-binding protein CML42 (CML42).